The following is a 398-amino-acid chain: 1-aminocyclopropane-1-carboxylate oxidase homolog 5 (398 aa).

A Fe2OG dioxygenase domain is found at 247 to 347 (KSHIMFGQYY…RISMPCFVST (101 aa)). The Fe cation site is built by H271, D273, and H327. R338 contacts 2-oxoglutarate.

It belongs to the iron/ascorbate-dependent oxidoreductase family. Fe(2+) is required as a cofactor. As to expression, expressed in etiolated seedlings, leaves, stems and flowers.

The sequence is that of 1-aminocyclopropane-1-carboxylate oxidase homolog 5 (2A6) from Arabidopsis thaliana (Mouse-ear cress).